The sequence spans 129 residues: M-zodatoxin-Lt8g (129 aa).

The signal sequence occupies residues 1–20; that stretch reads MKYFVVALALVAAFACIAES. Residues 21 to 60 constitute a propeptide that is removed on maturation; it reads KPAESEHELAEVEEENELADLEDAVWLEHLADLSDLEEAR. Residues 57-60 carry the Processing quadruplet motif motif; it reads EEAR.

Cleavage of the propeptide depends on the processing quadruplet motif (XXXR, with at least one of X being E). As to expression, expressed by the venom gland.

The protein localises to the secreted. Insecticidal, cytolytic and antimicrobial peptide. Has insecticidal activity against the flesh fly S.carnaria. Has antibacterial activity against the Gram-negative bacteria E.coli. Forms voltage-dependent, ion-permeable channels in membranes. At high concentration causes cell membrane lysis. The polypeptide is M-zodatoxin-Lt8g (cit 1-8) (Lachesana tarabaevi (Spider)).